The following is a 373-amino-acid chain: ATP phosphoribosyltransferase regulatory subunit (373 aa).

The protein belongs to the class-II aminoacyl-tRNA synthetase family. HisZ subfamily. As to quaternary structure, heteromultimer composed of HisG and HisZ subunits.

Its subcellular location is the cytoplasm. Its pathway is amino-acid biosynthesis; L-histidine biosynthesis; L-histidine from 5-phospho-alpha-D-ribose 1-diphosphate: step 1/9. In terms of biological role, required for the first step of histidine biosynthesis. May allow the feedback regulation of ATP phosphoribosyltransferase activity by histidine. This chain is ATP phosphoribosyltransferase regulatory subunit, found in Rhizobium etli (strain CIAT 652).